Here is a 64-residue protein sequence, read N- to C-terminus: Long neurotoxin MS2 (64 aa).

Cystine bridges form between cysteine 3/cysteine 24, cysteine 6/cysteine 11, cysteine 17/cysteine 41, cysteine 45/cysteine 57, and cysteine 58/cysteine 63.

This sequence belongs to the three-finger toxin family. Ancestral subfamily. In terms of tissue distribution, expressed by the venom gland.

It is found in the secreted. Produces peripheral paralysis by blocking neuromuscular transmission at the postsynaptic site. Very weak inhibitor of the endogenous nicotinic acetylcholine receptors (nAChR) in the human rhabdomyosarcoma TE 671 cell line. Not toxic to mice by intraperitoneal injection or to zebrafish by injection at the back of the dorsolateral region. The chain is Long neurotoxin MS2 from Micrurus surinamensis (Surinam coral snake).